Reading from the N-terminus, the 107-residue chain is UPF0213 protein SG0387 (107 aa).

Residues 4–79 (SLWHLYLIRT…KQLSRAQKEH (76 aa)) form the GIY-YIG domain.

It belongs to the UPF0213 family.

The sequence is that of UPF0213 protein SG0387 from Sodalis glossinidius (strain morsitans).